Reading from the N-terminus, the 185-residue chain is Elongation factor P (185 aa).

This sequence belongs to the elongation factor P family.

Its subcellular location is the cytoplasm. It functions in the pathway protein biosynthesis; polypeptide chain elongation. Its function is as follows. Involved in peptide bond synthesis. Stimulates efficient translation and peptide-bond synthesis on native or reconstituted 70S ribosomes in vitro. Probably functions indirectly by altering the affinity of the ribosome for aminoacyl-tRNA, thus increasing their reactivity as acceptors for peptidyl transferase. This Burkholderia vietnamiensis (strain G4 / LMG 22486) (Burkholderia cepacia (strain R1808)) protein is Elongation factor P.